Reading from the N-terminus, the 326-residue chain is 4-hydroxy-3-methylbut-2-enyl diphosphate reductase (326 aa).

C22 serves as a coordination point for [4Fe-4S] cluster. 2 residues coordinate (2E)-4-hydroxy-3-methylbut-2-enyl diphosphate: H51 and H84. The dimethylallyl diphosphate site is built by H51 and H84. Isopentenyl diphosphate contacts are provided by H51 and H84. A [4Fe-4S] cluster-binding site is contributed by C106. (2E)-4-hydroxy-3-methylbut-2-enyl diphosphate is bound at residue H134. A dimethylallyl diphosphate-binding site is contributed by H134. Isopentenyl diphosphate is bound at residue H134. The active-site Proton donor is the E136. T174 is a (2E)-4-hydroxy-3-methylbut-2-enyl diphosphate binding site. Position 204 (C204) interacts with [4Fe-4S] cluster. 4 residues coordinate (2E)-4-hydroxy-3-methylbut-2-enyl diphosphate: S232, S233, N234, and S276. Dimethylallyl diphosphate contacts are provided by S232, S233, N234, and S276. Residues S232, S233, N234, and S276 each coordinate isopentenyl diphosphate.

Belongs to the IspH family. [4Fe-4S] cluster serves as cofactor.

The enzyme catalyses isopentenyl diphosphate + 2 oxidized [2Fe-2S]-[ferredoxin] + H2O = (2E)-4-hydroxy-3-methylbut-2-enyl diphosphate + 2 reduced [2Fe-2S]-[ferredoxin] + 2 H(+). It carries out the reaction dimethylallyl diphosphate + 2 oxidized [2Fe-2S]-[ferredoxin] + H2O = (2E)-4-hydroxy-3-methylbut-2-enyl diphosphate + 2 reduced [2Fe-2S]-[ferredoxin] + 2 H(+). It functions in the pathway isoprenoid biosynthesis; dimethylallyl diphosphate biosynthesis; dimethylallyl diphosphate from (2E)-4-hydroxy-3-methylbutenyl diphosphate: step 1/1. The protein operates within isoprenoid biosynthesis; isopentenyl diphosphate biosynthesis via DXP pathway; isopentenyl diphosphate from 1-deoxy-D-xylulose 5-phosphate: step 6/6. Its function is as follows. Catalyzes the conversion of 1-hydroxy-2-methyl-2-(E)-butenyl 4-diphosphate (HMBPP) into a mixture of isopentenyl diphosphate (IPP) and dimethylallyl diphosphate (DMAPP). Acts in the terminal step of the DOXP/MEP pathway for isoprenoid precursor biosynthesis. This Bordetella bronchiseptica (strain ATCC BAA-588 / NCTC 13252 / RB50) (Alcaligenes bronchisepticus) protein is 4-hydroxy-3-methylbut-2-enyl diphosphate reductase.